The sequence spans 497 residues: Alkene monooxygenase system, oxygenase component subunit alpha (497 aa).

Fe cation is bound by residues Glu104, Glu134, His137, Glu197, Glu231, and His234.

The protein belongs to the TmoA/XamoA family. As to quaternary structure, the alkene monooxygenase multicomponent enzyme system is composed of an electron transfer component and a monooxygenase component interacting with the effector protein XamoD. The electron transfer component is composed of a ferredoxin reductase (XamoF) and a ferredoxin (XamoC), and the monooxygenase component is formed by a heterohexamer (dimer of heterotrimers) of two alpha subunits (XamoA), two beta subunits (XamoE) and two gamma subunits (XamoB). Fe(2+) is required as a cofactor.

It localises to the cytoplasm. It carries out the reaction propene + NADH + O2 + H(+) = 1,2-epoxypropane + NAD(+) + H2O. Inhibited by propyne. Its function is as follows. Component of the alkene monooxygenase multicomponent enzyme system which catalyzes the O2- and NADH-dependent epoxidation of short chain (C2 to C6) alkenes to their corresponding epoxides. Also able to catalyze the oxidation of a number of chlorinated alkenes, including trichloroethylene, cis- and trans-1,2-dichloroethylene, vinyl chloride, 1-chloropropylene, 1,3-dichloropropylene and 2,3-dichloropropylene. This is Alkene monooxygenase system, oxygenase component subunit alpha from Xanthobacter autotrophicus (strain ATCC BAA-1158 / Py2).